The sequence spans 228 residues: Chromatin remodeling protein SHL (228 aa).

Positions K21 to R137 constitute a BAH domain. The PHD-type zinc-finger motif lies at T139 to Q190. A compositionally biased stretch (polar residues) spans Q191 to N203. The disordered stretch occupies residues Q191–G228. The span at R204–K218 shows a compositional bias: basic and acidic residues. The short motif at G210–T217 is the Nuclear localization signal element. Basic residues predominate over residues S219–G228.

This sequence belongs to the SHL1/EBS protein family. As to quaternary structure, recognizes di- and trimethylated histone H3 at lysine 4. Interacts with HDA6. Interacts with DEK3. Expressed ubiquitously. Mostly expressed in roots, stems, leaves and flowers, and, to a lower extent, in siliques.

Its subcellular location is the nucleus. Functionally, chromatin remodeling factor that binds to methylated histone (e.g. H3K4me2/3) to prevent their acetylation (e.g. H3K9K14Ac), likely by recruiting histone deacetylase (HDAC) complexes, and thus regulate the transcription of target genes. Required during development and for fertility, probably by modulating developmental gene expression. Promotes development speed, but at fitness cost. Involved in the chromatin-mediated repression of floral initiation and controls genes regulating flowering. Negatively regulates the expression of the floral integrator SOC1, by preventing high levels of H3 acetylation, thus maintaining an inactive chromatin conformation. This Arabidopsis thaliana (Mouse-ear cress) protein is Chromatin remodeling protein SHL.